Consider the following 477-residue polypeptide: V-type ATP synthase beta chain (477 aa).

This sequence belongs to the ATPase alpha/beta chains family.

Produces ATP from ADP in the presence of a proton gradient across the membrane. The V-type beta chain is a regulatory subunit. This Anaeromyxobacter sp. (strain K) protein is V-type ATP synthase beta chain.